A 417-amino-acid polypeptide reads, in one-letter code: Sterile alpha motif domain-containing protein 14 (417 aa).

Positions 36 to 302 are disordered; that stretch reads QLLAKGRRHR…GGPRQETKCS (267 aa). The span at 40–49 shows a compositional bias: basic residues; that stretch reads KGRRHRPSRS. Residues serine 84 and serine 108 each carry the phosphoserine modification. Residues 138-153 show a composition bias toward low complexity; the sequence is SGSPPRSAPSSDSSPS. Basic and acidic residues predominate over residues 159–173; that stretch reads PRAEPHSEDDSRDAS. Phosphoserine occurs at positions 173 and 179. Low complexity-rich tracts occupy residues 244 to 260 and 276 to 289; these read SGKG…PTCS and STLS…SSSP. Serine 279 carries the post-translational modification Phosphoserine. Threonine 283 bears the Phosphothreonine mark. Residues 326-389 enclose the SAM domain; the sequence is WTSQQVGQWL…KRKLKELAAA (64 aa). The stretch at 375–416 forms a coiled coil; sequence DRALVKRKLKELAAAAEKERKAQEKTAKQREKLRRRENDAKK. Residues 390–417 are disordered; that stretch reads AEKERKAQEKTAKQREKLRRRENDAKKS.

The sequence is that of Sterile alpha motif domain-containing protein 14 (Samd14) from Mus musculus (Mouse).